Here is a 693-residue protein sequence, read N- to C-terminus: Guanyl-specific ribonuclease pgl-3 (693 aa).

The segment at 205 to 447 (KKLMIEGPKI…VNRIIESLEK (243 aa)) is involved in dimerization. The active-site Proton acceptor is His437. Disordered stretches follow at residues 445 to 468 (LEKSSSSEPSATAKQTTTSNGPTT), 523 to 591 (AEKN…DATP), and 620 to 693 (SSNG…RGGS). Residues 447–468 (KSSSSEPSATAKQTTTSNGPTT) are compositionally biased toward low complexity. Composition is skewed to polar residues over residues 528-548 (NTPSTASPVQFSSDGWDSPTK) and 569-580 (ITKVSPQPQERT). Residues 581–614 (GTAWGSGDATPVPLATPVNEYKVSGFGAAPVASG) form a required for interaction with sepa-1 region. Gly residues-rich tracts occupy residues 625-634 (SGRGSYGGGR), 641-660 (RGAYGGDRGRGGSGDGSRGY), and 668-693 (RGSYGEGSRGYQGGRAGFFGGSRGGS). Residues 633–693 (GRGGDRGGRG…GFFGGSRGGS (61 aa)) are RNA-binding RGG-box.

In terms of assembly, may form a homodimer. Interacts with pgl-1 and pgl-2; this association is not required for P-granule localization of either pgl-1 or pgl-2. Interacts with sepa-1; the interaction is enhanced in the presence of RNA. Interacts with prmt-1; the interaction is direct. Post-translationally, methylated at arginine residues in the RNA-binding RGG-box by prmt-1. Methylation promotes P-granule degradation by autophagy. As to expression, highly expressed in the germline. Expressed in most somatic cells.

It is found in the cytoplasmic granule. The catalysed reaction is [RNA] containing guanosine + H2O = an [RNA fragment]-3'-guanosine-3'-phosphate + a 5'-hydroxy-ribonucleotide-3'-[RNA fragment].. Guanyl-specific endoribonuclease which cleaves the phosphodiester bond in single-stranded RNA between the 3'-guanylic residue and the 5'-OH residue of adjacent nucleotide, resulting in the formation of a corresponding 2',3'-cyclic phosphate intermediate. P-granule component involved in germline development. Together with the P-granule component pgl-1, is involved in the formation of P-granules. Together with pgl-1, probably recruits other granule components such as pos-1, mex-3 and glh-1, and RNA to P-granules. In vitro, binds mRNA; this interaction is required for the formation of liquid-like droplets that resemble P-granules. Most likely recruits pgl-1 into P-granules during autophagy. Associates with adapters such as sepa-1 and is required for the accumulation and degradation of P-granules by autophagy in somatic cells. This ensures exclusive localization of the P-granules in germ cells. In addition, may act redundantly with pgl-1 to protect germ cells from excessive germline apoptosis during normal oogenesis and development of the two gonadal arms. This may in part be through regulating the localization of sir-2.1 which is involved in germ cell apoptosis. May protect somatic cells from excessive apoptosis during normal development. The protein is Guanyl-specific ribonuclease pgl-3 of Caenorhabditis elegans.